The chain runs to 349 residues: D-alanine--D-alanine ligase (349 aa).

One can recognise an ATP-grasp domain in the interval 132 to 335 (KHVFEAVGVP…YSDLIEKLVD (204 aa)). An ATP-binding site is contributed by 162 to 217 (VEKLEFPVFVKPANMGSSVGISKVDDLADLQPALSEAYKYDNRVVIEQGVDAREIE). Residues Asp-289, Glu-302, and Asn-304 each contribute to the Mg(2+) site.

The protein belongs to the D-alanine--D-alanine ligase family. Requires Mg(2+) as cofactor. Mn(2+) is required as a cofactor.

The protein localises to the cytoplasm. The enzyme catalyses 2 D-alanine + ATP = D-alanyl-D-alanine + ADP + phosphate + H(+). It functions in the pathway cell wall biogenesis; peptidoglycan biosynthesis. Functionally, cell wall formation. This Lactococcus lactis subsp. cremoris (strain SK11) protein is D-alanine--D-alanine ligase.